Reading from the N-terminus, the 398-residue chain is Protochlorophyllide reductase, chloroplastic (398 aa).

This sequence belongs to the short-chain dehydrogenases/reductases (SDR) family. POR subfamily.

The protein localises to the plastid. It localises to the chloroplast. It catalyses the reaction chlorophyllide a + NADP(+) = protochlorophyllide a + NADPH + H(+). Its pathway is porphyrin-containing compound metabolism; chlorophyll biosynthesis. Phototransformation of protochlorophyllide (Pchlide) to chlorophyllide (Chlide). The sequence is that of Protochlorophyllide reductase, chloroplastic (POR1) from Daucus carota (Wild carrot).